Here is a 320-residue protein sequence, read N- to C-terminus: ATP-dependent 6-phosphofructokinase (320 aa).

Glycine 11 is a binding site for ATP. 21–25 serves as a coordination point for ADP; the sequence is RAVTK. ATP-binding positions include 72–73 and 102–105; these read RF and GDGS. Aspartate 103 is a Mg(2+) binding site. Substrate is bound at residue 125 to 127; the sequence is TID. Aspartate 127 functions as the Proton acceptor in the catalytic mechanism. Position 154 (arginine 154) interacts with ADP. Substrate is bound by residues arginine 162 and 169–171; that span reads MGR. Residues 185–187 and 213–215 each bind ADP; these read GAD and KDH. Substrate-binding positions include glutamate 222, arginine 243, and 249 to 252; that span reads HMQR.

It belongs to the phosphofructokinase type A (PFKA) family. ATP-dependent PFK group I subfamily. Prokaryotic clade 'B1' sub-subfamily. Homotetramer. Mg(2+) serves as cofactor.

It is found in the cytoplasm. The catalysed reaction is beta-D-fructose 6-phosphate + ATP = beta-D-fructose 1,6-bisphosphate + ADP + H(+). It participates in carbohydrate degradation; glycolysis; D-glyceraldehyde 3-phosphate and glycerone phosphate from D-glucose: step 3/4. Its activity is regulated as follows. Allosterically activated by ADP and other diphosphonucleosides, and allosterically inhibited by phosphoenolpyruvate. Catalyzes the phosphorylation of D-fructose 6-phosphate to fructose 1,6-bisphosphate by ATP, the first committing step of glycolysis. In Lactobacillus helveticus (strain DPC 4571), this protein is ATP-dependent 6-phosphofructokinase.